The primary structure comprises 463 residues: Asparagine--tRNA ligase (463 aa).

This sequence belongs to the class-II aminoacyl-tRNA synthetase family. Homodimer.

It localises to the cytoplasm. It carries out the reaction tRNA(Asn) + L-asparagine + ATP = L-asparaginyl-tRNA(Asn) + AMP + diphosphate + H(+). The polypeptide is Asparagine--tRNA ligase (Bacillus cytotoxicus (strain DSM 22905 / CIP 110041 / 391-98 / NVH 391-98)).